The primary structure comprises 611 residues: UvrABC system protein C (611 aa).

Residues 6-84 (NNPGVYRMFN…IKRSRPRFNV (79 aa)) enclose the GIY-YIG domain. A UVR domain is found at 194–229 (QSVKDHLAAAMQAASADLDFEHAAVYRDRLAALSHV).

This sequence belongs to the UvrC family. Interacts with UvrB in an incision complex.

Its subcellular location is the cytoplasm. Functionally, the UvrABC repair system catalyzes the recognition and processing of DNA lesions. UvrC both incises the 5' and 3' sides of the lesion. The N-terminal half is responsible for the 3' incision and the C-terminal half is responsible for the 5' incision. This Brucella suis biovar 1 (strain 1330) protein is UvrABC system protein C.